A 338-amino-acid chain; its full sequence is Anthranilate phosphoribosyltransferase (338 aa).

5-phospho-alpha-D-ribose 1-diphosphate-binding positions include Gly81, 84–85, Thr89, 91–94, 109–117, and Ala121; these read GD, NIST, and KHGNRNLSS. Gly81 serves as a coordination point for anthranilate. Ser93 provides a ligand contact to Mg(2+). Asn112 is an anthranilate binding site. Arg167 lines the anthranilate pocket. Positions 226 and 227 each coordinate Mg(2+).

Belongs to the anthranilate phosphoribosyltransferase family. In terms of assembly, homodimer. The cofactor is Mg(2+).

The catalysed reaction is N-(5-phospho-beta-D-ribosyl)anthranilate + diphosphate = 5-phospho-alpha-D-ribose 1-diphosphate + anthranilate. The protein operates within amino-acid biosynthesis; L-tryptophan biosynthesis; L-tryptophan from chorismate: step 2/5. Its function is as follows. Catalyzes the transfer of the phosphoribosyl group of 5-phosphorylribose-1-pyrophosphate (PRPP) to anthranilate to yield N-(5'-phosphoribosyl)-anthranilate (PRA). This Cereibacter sphaeroides (strain ATCC 17023 / DSM 158 / JCM 6121 / CCUG 31486 / LMG 2827 / NBRC 12203 / NCIMB 8253 / ATH 2.4.1.) (Rhodobacter sphaeroides) protein is Anthranilate phosphoribosyltransferase.